The following is a 474-amino-acid chain: Aromatic amino acid aminotransferase C56E4.03 (474 aa).

This sequence belongs to the class-I pyridoxal-phosphate-dependent aminotransferase family. Requires pyridoxal 5'-phosphate as cofactor.

The protein localises to the cytoplasm. It carries out the reaction an aromatic L-alpha-amino acid + 2-oxoglutarate = an aromatic oxo-acid + L-glutamate. Has aromatic amino acid transaminase activity. This chain is Aromatic amino acid aminotransferase C56E4.03, found in Schizosaccharomyces pombe (strain 972 / ATCC 24843) (Fission yeast).